A 399-amino-acid chain; its full sequence is Tyrosine--tRNA ligase 2 (399 aa).

The 'HIGH' region motif lies at 41–50 (PTAPDLHLGH). Residues 225–229 (KMSKS) carry the 'KMSKS' region motif. Position 228 (Lys228) interacts with ATP. An S4 RNA-binding domain is found at 336–398 (ILIANLLKEA…GKRKFANITV (63 aa)).

Belongs to the class-I aminoacyl-tRNA synthetase family. TyrS type 2 subfamily. As to quaternary structure, homodimer.

The protein localises to the cytoplasm. The catalysed reaction is tRNA(Tyr) + L-tyrosine + ATP = L-tyrosyl-tRNA(Tyr) + AMP + diphosphate + H(+). In terms of biological role, catalyzes the attachment of tyrosine to tRNA(Tyr) in a two-step reaction: tyrosine is first activated by ATP to form Tyr-AMP and then transferred to the acceptor end of tRNA(Tyr). In Pseudoalteromonas translucida (strain TAC 125), this protein is Tyrosine--tRNA ligase 2.